Consider the following 328-residue polypeptide: MGKGDVLEAAPTTTAYHSLMDEYGYEVGKAIGHGSYGSVYEAFYTKQKVMVAVKIISKKKASDDYLNKFLPREIQVMKVLRHKYLINFYRAIESTSRVYIILELAQGGDVLEWIQRYGACSEPLAGKWFSQLTLGIAYLHSKSIVHRDLKLENLLLDKWENVKISDFGFAKMVPSNQPVGCSPSYRQVNCFSHLSQTYCGSFAYACPEILRGLPYNPFLSDTWSMGVILYTLVVAHLPFDDTNLKKLLRETQKEVTFPANHTISQECKNLILQMLRQATKRATILDIIKDSWVLKFQPEQPTHEIRLLEAMCQLHNTTKQHQSLQITT.

The Protein kinase domain occupies 25-293 (YEVGKAIGHG…ILDIIKDSWV (269 aa)). ATP is bound by residues 31 to 39 (IGHGSYGSV) and Lys-54. Asp-148 serves as the catalytic Proton acceptor. Thr-197 is modified (phosphothreonine).

It belongs to the protein kinase superfamily. CAMK Ser/Thr protein kinase family. Homodimer. Interacts with HSP90; this interaction stabilizes and activates TSSK4. Interacts with ODF2 (via C-terminus); this interaction promotes ODF2 phosphorylation on 'Ser-95'. May interact with CREM. Interacts with CREB1; this interaction facilitates phosphorylation on 'Ser-133'. Interacts with QRICH2. Mg(2+) serves as cofactor. In terms of processing, activated by autophosphorylation on Thr-197. ODF2 potentiates the autophosphorylation activity of TSSK4 at Thr-197. Post-translationally, ubiquitinated; HSP90 activity negatively regulates ubiquitination and degradation. Expressed only in the testis.

The protein resides in the cytoplasmic vesicle. It localises to the secretory vesicle. Its subcellular location is the acrosome. It is found in the cell projection. The protein localises to the cilium. The protein resides in the flagellum. It carries out the reaction L-seryl-[protein] + ATP = O-phospho-L-seryl-[protein] + ADP + H(+). It catalyses the reaction L-threonyl-[protein] + ATP = O-phospho-L-threonyl-[protein] + ADP + H(+). With respect to regulation, activated by phosphorylation on Thr-197. In terms of biological role, serine/threonine kinase which is involved in male germ cell development and in mature sperm function. May be involved in the Cre/Creb signaling pathway. Phosphorylates CREB1 on 'Ser-133' in vitro and can stimulate Cre/Creb pathway in cells. Phosphorylates CREM on 'Ser-116' in vitro. Phosphorylates ODF2 on 'Ser-95'. The polypeptide is Testis-specific serine/threonine-protein kinase 4 (Homo sapiens (Human)).